Reading from the N-terminus, the 201-residue chain is MNSLAIRVSKVLRSSSISPLAISAERGSKSWFSTGPIDEGVEEDFEENVTERPELQPHGVDPRKGWGFRGVHRAIICGKVGQAPLQKILRNGRTVTIFTVGTGGMFDQRLVGATNQPKPAQWHRIAVHNEVLGSYAVQKLAKNSSVYVEGDIETRVYNDSISSEVKSIPEICVRRDGKIRMIKYGESISKISFDELKEGLI.

One can recognise an SSB domain in the interval 71-184 (VHRAIICGKV…RDGKIRMIKY (114 aa)).

It localises to the mitochondrion. In terms of biological role, binds to ss-DNA. The chain is Single-stranded DNA-binding protein, mitochondrial from Arabidopsis thaliana (Mouse-ear cress).